Here is a 279-residue protein sequence, read N- to C-terminus: Fatty acid desaturase 4-like 2, chloroplastic (279 aa).

The N-terminal 30 residues, 1–30 (MATSLQTKYTLNPITNNIPRSHRPSFLRVT), are a transit peptide targeting the chloroplast. The next 3 helical transmembrane spans lie at 68 to 90 (LWVA…GAFG), 98 to 118 (SLAG…YHWA), and 178 to 198 (VVHG…LFHA).

Belongs to the fatty acid desaturase CarF family.

It is found in the plastid. The protein resides in the chloroplast membrane. Its pathway is lipid metabolism; fatty acid metabolism. Functionally, fatty acid desaturase involved in the production of chloroplast-specific phosphatidylglycerol molecular species. Catalyzes the formation of a trans double bond introduced close to the carboxyl group of palmitic acid, which is specifically esterified to the sn-2 glyceryl carbon of phosphatidylglycerol. This is Fatty acid desaturase 4-like 2, chloroplastic (FAD4L2) from Arabidopsis thaliana (Mouse-ear cress).